A 266-amino-acid chain; its full sequence is MALVKGKVNINEFIDLSKSEKFLPSMFTPVKSVMISKVDKILVHEDESLSEVNLLKGVKLIDGGYVHLAGLVVTGEWNLPDNCRGGVSVCLVDKRMERADEATLASYYTAAAKKRFQFKVVPNYNITTKDAEKAVWQVLVNIRNVKIAAGYCPLSLEFVSVCIVYKNIIKLGLREKITSVTDGGPMELSEEVVDEFMEEVPMSVRLAKFRSKTGKKFSSKSENNSGNNRPKPDKNQRKEKGLKVRVEKDNLIDNELETYVADSDSY.

The interval 211–244 (SKTGKKFSSKSENNSGNNRPKPDKNQRKEKGLKV) is disordered. Positions 230 to 244 (PKPDKNQRKEKGLKV) are enriched in basic and acidic residues.

It belongs to the tobamovirus movement protein family. Binds to host RBCS at the plasmodesmata; this interaction seems required for viral systemic movement.

The protein resides in the host cytoplasm. It is found in the host cytoskeleton. The protein localises to the host cell junction. It localises to the host plasmodesma. In terms of biological role, transports viral genome to neighboring plant cells directly through plasmosdesmata, without any budding. The movement protein allows efficient cell to cell propagation, by bypassing the host cell wall barrier. Forms a ribonucleoprotein complex with viral RNA. Binds microtubules and modulates microtubule stability. Can bind double-stranded DNA. Evades host resistance (R) protein (e.g. tomato ToMV resistance protein TM-2(2), AC Q71BG9) in ToMV/TMV resistant plants. This Tomato brown rugose fruit virus (isolate TOBRFV/Tomato/Jordan/Tom1-Jo/2015) (ToBRFV) protein is Movement protein (MP).